The following is a 155-amino-acid chain: Ribonuclease H (155 aa).

One can recognise an RNase H type-1 domain in the interval 1 to 146; that stretch reads MPELFAYTDG…ADELARAGMK (146 aa). The Mg(2+) site is built by D9, E52, D74, and D138.

It belongs to the RNase H family. As to quaternary structure, monomer. It depends on Mg(2+) as a cofactor.

Its subcellular location is the cytoplasm. It catalyses the reaction Endonucleolytic cleavage to 5'-phosphomonoester.. Its function is as follows. Endonuclease that specifically degrades the RNA of RNA-DNA hybrids. This Ruegeria pomeroyi (strain ATCC 700808 / DSM 15171 / DSS-3) (Silicibacter pomeroyi) protein is Ribonuclease H.